Consider the following 342-residue polypeptide: Isopentenyl-diphosphate delta-isomerase (342 aa).

Residue 12 to 13 (RK) participates in substrate binding. FMN-binding positions include 71-73 (AMT), serine 101, and asparagine 129. Substrate is bound at residue 101-103 (SQR). Glutamine 163 is a binding site for substrate. Glutamate 164 contacts Mg(2+). Residues lysine 195, threonine 225, 272 to 274 (GIR), and 293 to 294 (AR) contribute to the FMN site.

This sequence belongs to the IPP isomerase type 2 family. As to quaternary structure, homooctamer. Dimer of tetramers. FMN is required as a cofactor. It depends on NADPH as a cofactor. The cofactor is Mg(2+).

It localises to the cytoplasm. The enzyme catalyses isopentenyl diphosphate = dimethylallyl diphosphate. Functionally, involved in the biosynthesis of isoprenoids. Catalyzes the 1,3-allylic rearrangement of the homoallylic substrate isopentenyl (IPP) to its allylic isomer, dimethylallyl diphosphate (DMAPP). This chain is Isopentenyl-diphosphate delta-isomerase, found in Mycolicibacterium vanbaalenii (strain DSM 7251 / JCM 13017 / BCRC 16820 / KCTC 9966 / NRRL B-24157 / PYR-1) (Mycobacterium vanbaalenii).